Reading from the N-terminus, the 436-residue chain is Testican-3 (436 aa).

The first 21 residues, 1–21 (MLKVSAVLCVCAAAWCSQSLA), serve as a signal peptide directing secretion. 8 cysteine pairs are disulfide-bonded: Cys90–Cys101, Cys95–Cys111, Cys139–Cys169, Cys142–Cys162, Cys151–Cys183, Cys317–Cys341, Cys352–Cys359, and Cys361–Cys380. The Kazal-like domain maps to 133–185 (GPILSTCKQCPVVYPSPVCGSDGHTYSFQCKLEYQACVLGKQISVKCEGHCPC). The Thyroglobulin type-1 domain maps to 314–380 (DPPCQTELSN…GSRINGVADC (67 aa)). O-linked (Xyl...) (glycosaminoglycan) serine glycosylation is found at Ser387 and Ser392. Residues 393–436 (GDFHEWTDDEDDEDDIMNDEDEIEDDDEDEGDDDDGGDDHDVYI) form a disordered region. Residues 399 to 430 (TDDEDDEDDIMNDEDEIEDDDEDEGDDDDGGD) show a composition bias toward acidic residues.

Post-translationally, contains chondroitin sulfate and heparan sulfate O-linked oligosaccharides. Expressed in brain.

The protein localises to the secreted. Its subcellular location is the extracellular space. It is found in the extracellular matrix. May participate in diverse steps of neurogenesis. Inhibits the processing of pro-matrix metalloproteinase 2 (MMP-2) by MT1-MMP and MT3-MMP. May interfere with tumor invasion. This chain is Testican-3 (SPOCK3), found in Homo sapiens (Human).